We begin with the raw amino-acid sequence, 498 residues long: MRINPTTSGSGVSTLEKKNPGRVVQIIGPVLDVAFPPGKMPNIYNALVVQGRDSVGQPINVACEVQQLLGNNRVRAVAMSATDGLTRGMAVIDTGAPIRVPVGGATLGRIFNVLGEPVDNLGPVDTSTTSPIHRSAPAFIQLDTKLSIFETGIKVVDLLAPYRRGGKIGLFGGAGVGKTVLIMELINNIAKAHGGVSVFGGVGERTREGNDLYMEMKESGVINKENIAESKVALVYGQMNEPPGARMRVGLTALTMAEYFRDVNEQDVLLFIDNIFRFVQAGSEVSALLGRMPSAVGYQPTLSTEMGSLQERITSTKDGSITSIQAVYVPADDLTDPAPATTFAHLDATTVLSRGLAAKGIYPAVDPLDSTSTMLQPRIVGEEHYETAQRVKQTLQRYKELQDIIAILGLDELSEEDRLLVARARKIERFLSQPFFVAEVFTGSPGKYVGLAETIRGFQLILSGELDGLPEQAFYLVGTIDEATAKAMNLEMESNLKK.

172 to 179 (GGAGVGKT) lines the ATP pocket.

The protein belongs to the ATPase alpha/beta chains family. In terms of assembly, F-type ATPases have 2 components, CF(1) - the catalytic core - and CF(0) - the membrane proton channel. CF(1) has five subunits: alpha(3), beta(3), gamma(1), delta(1), epsilon(1). CF(0) has four main subunits: a(1), b(1), b'(1) and c(9-12).

Its subcellular location is the plastid. The protein localises to the chloroplast thylakoid membrane. The enzyme catalyses ATP + H2O + 4 H(+)(in) = ADP + phosphate + 5 H(+)(out). In terms of biological role, produces ATP from ADP in the presence of a proton gradient across the membrane. The catalytic sites are hosted primarily by the beta subunits. The protein is ATP synthase subunit beta, chloroplastic of Solanum tuberosum (Potato).